The chain runs to 346 residues: SUMO-activating enzyme subunit 1 (346 aa).

Met1 carries the post-translational modification N-acetylmethionine. At Val2 the chain carries N-acetylvaline; in SUMO-activating enzyme subunit 1, N-terminally processed. Ser12 is modified (phosphoserine). Lys198 carries the N6-acetyllysine modification.

Belongs to the ubiquitin-activating E1 family. Heterodimer of SAE1 and UBA2/SAE2. The heterodimer corresponds to the two domains that are encoded on a single polypeptide chain in ubiquitin-activating enzyme E1. Interacts with UBE2I.

It is found in the nucleus. It participates in protein modification; protein sumoylation. In terms of biological role, the heterodimer acts as an E1 ligase for SUMO1, SUMO2, SUMO3, and probably SUMO4. It mediates ATP-dependent activation of SUMO proteins followed by formation of a thioester bond between a SUMO protein and a conserved active site cysteine residue on UBA2/SAE2. This chain is SUMO-activating enzyme subunit 1 (SAE1), found in Bos taurus (Bovine).